A 180-amino-acid polypeptide reads, in one-letter code: Mitochondrial membrane protein FMP33 (180 aa).

Helical transmembrane passes span leucine 34 to glutamate 54, phenylalanine 121 to glycine 141, and isoleucine 145 to leucine 165.

The protein resides in the mitochondrion membrane. This is Mitochondrial membrane protein FMP33 (FMP33) from Saccharomyces cerevisiae (strain ATCC 204508 / S288c) (Baker's yeast).